Consider the following 95-residue polypeptide: Toxin Tbo-IT2 (95 aa).

The first 23 residues, 1 to 23 (MTMKTLCLSLIVIGVLILVAVKA), serve as a signal peptide directing secretion. The propeptide occupies 24-53 (EDYVNINSLEEAPEENVNINNLEETPEESR). 5 disulfide bridges follow: Cys-54–Cys-68, Cys-61–Cys-73, Cys-67–Cys-84, Cys-70–Cys-92, and Cys-75–Cys-82. Position 92 is a cysteine amide (Cys-92).

This sequence belongs to the neurotoxin 02 (plectoxin) family. 02 (plectoxin) subfamily. In terms of tissue distribution, expressed by the venom gland.

It localises to the secreted. This recombinant (non-amidated) toxin shows insecticidal activity on larvae of the housefly Musca domestica and has no activity on a panel of expressed neuronal receptors and ion channels. This Tibellus oblongus (Oblong running crab spider) protein is Toxin Tbo-IT2.